The chain runs to 198 residues: MSETFIYPQANLIAGVDEVGRGPLVGAVVTAAVILDPNRPIVGLADSKKLSEKRRLSLYDEITEKALSWSLGRAEPEEIDQLNILHAAMLAMQRAVSGLHIVPDYVLIDGNRCPKLQMPSLAVVKGDSRVAEISAASILAKVTRDREMTELDLLFPEYGFAQHKGYPTAFHLEKLAALGATVHHRRSFGPVKRVLGLV.

An RNase H type-2 domain is found at 11 to 198 (NLIAGVDEVG…GPVKRVLGLV (188 aa)). The a divalent metal cation site is built by aspartate 17, glutamate 18, and aspartate 109.

The protein belongs to the RNase HII family. The cofactor is Mn(2+). Mg(2+) serves as cofactor.

The protein localises to the cytoplasm. The enzyme catalyses Endonucleolytic cleavage to 5'-phosphomonoester.. Functionally, endonuclease that specifically degrades the RNA of RNA-DNA hybrids. This Yersinia pseudotuberculosis serotype O:3 (strain YPIII) protein is Ribonuclease HII.